The sequence spans 404 residues: Odorant receptor 67c (404 aa).

The Cytoplasmic segment spans residues 1 to 45 (METAKDNTARTFMELMRVPVQFYRTIGEDIYAHRSTNPLKSLLFK). The helical transmembrane segment at 46 to 66 (IYLYAGFINFNLLVIGELVFF) threads the bilayer. The Extracellular portion of the chain corresponds to 67-79 (YNSIQDFETIRLA). A helical membrane pass occupies residues 80–100 (IAVAPCIGFSLVADFKQAAMI). Residues 101–139 (RGKKTLIMLLDDLENMHPKTLAKQMEYKLPDFEKTMKRV) lie on the Cytoplasmic side of the membrane. Residues 140–160 (INIFTFLCLAYTTTFSFYPAI) traverse the membrane as a helical segment. Over 161–204 (KASVKFNFLGYDTFDRNFGFLIWFPFDATRNNLIYWIMYWDIAH) the chain is Extracellular. A helical membrane pass occupies residues 205–225 (GAYLAGIAFLCADLLLVVVIT). Residues 226–277 (QICMHFNYISMRLEDHPCNSNEDKENIEFLIGIIRYHDKCLKLCEHVNDLYS) are Cytoplasmic-facing. Residues 278-298 (FSLLLNFLMASMQICFIAFQV) form a helical membrane-spanning segment. The Extracellular portion of the chain corresponds to 299-304 (TESTVE). The chain crosses the membrane as a helical span at residues 305-326 (VIIIYCIFLMTSMVQVFMVCYY). Over 327-373 (GDTLIAASLKVGDAAYNQKWFQCSKSYCTMLKLLIMRSQKPASIRPP) the chain is Cytoplasmic. The helical transmembrane segment at 374–394 (TFPPISLVTYMKVISMSYQFF) threads the bilayer. At 395–404 (ALLRTTYSNN) the chain is on the extracellular side.

It belongs to the insect chemoreceptor superfamily. Heteromeric odorant receptor channel (TC 1.A.69) family. Or49a subfamily. As to quaternary structure, interacts with Orco. Complexes exist early in the endomembrane system in olfactory sensory neurons (OSNs), coupling these complexes to the conserved ciliary trafficking pathway. Expressed in olfactory sensory neurons in the antenna.

It localises to the cell membrane. Functionally, odorant receptor which mediates acceptance or avoidance behavior, depending on its substrates. The odorant receptor repertoire encodes a large collection of odor stimuli that vary widely in identity, intensity, and duration. May form a complex with Orco to form odorant-sensing units, providing sensitive and prolonged odorant signaling and calcium permeability. The sequence is that of Odorant receptor 67c (Or67c) from Drosophila melanogaster (Fruit fly).